The sequence spans 318 residues: MNYQVLLYYKYTTIDDPEQFAQDHLAFCKAHHLKGRILVSTEGINGTLSGTKEETEQYMAHMHADERFKDMVFKIDEAEGHAFKKMHVRPRKEIVALDLEDDVDPRHTTGQYLSPVEFRKALEDDDTVIIDARNDYEFDLGHFRGAIRPNITRFRDLPDWIKENKALFADKKVVTYCTGGIRCEKFSGWLLKEGFEDVAQLHGGIATYGKDPETKGEYWDGKMYVFDDRISVNINQVEKTIIGKDWFDGKPCERYINCANPECNKQILVSEENETKYLGACSYECAKHERNRYVQANNISDNEWQQRLTNFDDLHQHA.

In terms of domain architecture, Rhodanese spans 123–217; sequence EDDDTVIIDA…YGKDPETKGE (95 aa). The active-site Cysteine persulfide intermediate is cysteine 177.

Belongs to the TrhO family.

The catalysed reaction is uridine(34) in tRNA + AH2 + O2 = 5-hydroxyuridine(34) in tRNA + A + H2O. In terms of biological role, catalyzes oxygen-dependent 5-hydroxyuridine (ho5U) modification at position 34 in tRNAs. The protein is tRNA uridine(34) hydroxylase of Staphylococcus aureus (strain MSSA476).